Reading from the N-terminus, the 282-residue chain is Shikimate kinase (282 aa).

Residue 86-96 (PIKSGLSSSSA) participates in ATP binding.

Belongs to the GHMP kinase family. Archaeal shikimate kinase subfamily.

It is found in the cytoplasm. It catalyses the reaction shikimate + ATP = 3-phosphoshikimate + ADP + H(+). The protein operates within metabolic intermediate biosynthesis; chorismate biosynthesis; chorismate from D-erythrose 4-phosphate and phosphoenolpyruvate: step 5/7. This is Shikimate kinase (aroK) from Methanocaldococcus jannaschii (strain ATCC 43067 / DSM 2661 / JAL-1 / JCM 10045 / NBRC 100440) (Methanococcus jannaschii).